Here is a 389-residue protein sequence, read N- to C-terminus: S-adenosylmethionine synthase (389 aa).

H15 lines the ATP pocket. Position 17 (D17) interacts with Mg(2+). E43 contacts K(+). L-methionine-binding residues include E56 and Q99. Residues 99–109 (QSPDIAQGVNE) form a flexible loop region. ATP-binding positions include 166–168 (DAK), 234–235 (RF), D243, 249–250 (RK), A266, and K270. Position 243 (D243) interacts with L-methionine. K274 is a binding site for L-methionine.

The protein belongs to the AdoMet synthase family. Homotetramer; dimer of dimers. The cofactor is Mg(2+). K(+) serves as cofactor.

It is found in the cytoplasm. It carries out the reaction L-methionine + ATP + H2O = S-adenosyl-L-methionine + phosphate + diphosphate. The protein operates within amino-acid biosynthesis; S-adenosyl-L-methionine biosynthesis; S-adenosyl-L-methionine from L-methionine: step 1/1. Its function is as follows. Catalyzes the formation of S-adenosylmethionine (AdoMet) from methionine and ATP. The overall synthetic reaction is composed of two sequential steps, AdoMet formation and the subsequent tripolyphosphate hydrolysis which occurs prior to release of AdoMet from the enzyme. This is S-adenosylmethionine synthase from Laribacter hongkongensis (strain HLHK9).